The following is a 366-amino-acid chain: Quinolinate synthase (366 aa).

H44 and S61 together coordinate iminosuccinate. Residue C108 coordinates [4Fe-4S] cluster. Residues Y139–N141 and S160 contribute to the iminosuccinate site. Residue C228 participates in [4Fe-4S] cluster binding. Iminosuccinate is bound by residues H254 to E256 and T271. C318 contributes to the [4Fe-4S] cluster binding site.

It belongs to the quinolinate synthase family. Type 3 subfamily. It depends on [4Fe-4S] cluster as a cofactor.

Its subcellular location is the cytoplasm. It catalyses the reaction iminosuccinate + dihydroxyacetone phosphate = quinolinate + phosphate + 2 H2O + H(+). The protein operates within cofactor biosynthesis; NAD(+) biosynthesis; quinolinate from iminoaspartate: step 1/1. In terms of biological role, catalyzes the condensation of iminoaspartate with dihydroxyacetone phosphate to form quinolinate. This is Quinolinate synthase from Staphylococcus carnosus (strain TM300).